We begin with the raw amino-acid sequence, 419 residues long: Putative zinc metalloprotease SPy_1963/M5005_Spy1674 (419 aa).

Histidine 18 serves as a coordination point for Zn(2+). The active site involves glutamate 19. Histidine 22 is a Zn(2+) binding site. A run of 4 helical transmembrane segments spans residues 169 to 191 (LITN…ILLV), 301 to 323 (LAWS…FSLN), 343 to 365 (LESV…LIPI), and 392 to 411 (AYIT…AVTW). Positions 175-274 (GPMNNFILGI…LKTVAVKPQK (100 aa)) constitute a PDZ domain.

Belongs to the peptidase M50B family. Requires Zn(2+) as cofactor.

Its subcellular location is the cell membrane. The protein is Putative zinc metalloprotease SPy_1963/M5005_Spy1674 of Streptococcus pyogenes serotype M1.